Consider the following 454-residue polypeptide: tRNA(Ile)-lysidine synthase (454 aa).

S31–S36 provides a ligand contact to ATP.

It belongs to the tRNA(Ile)-lysidine synthase family.

Its subcellular location is the cytoplasm. It catalyses the reaction cytidine(34) in tRNA(Ile2) + L-lysine + ATP = lysidine(34) in tRNA(Ile2) + AMP + diphosphate + H(+). Its function is as follows. Ligates lysine onto the cytidine present at position 34 of the AUA codon-specific tRNA(Ile) that contains the anticodon CAU, in an ATP-dependent manner. Cytidine is converted to lysidine, thus changing the amino acid specificity of the tRNA from methionine to isoleucine. The chain is tRNA(Ile)-lysidine synthase from Porphyromonas gingivalis (strain ATCC BAA-308 / W83).